A 158-amino-acid chain; its full sequence is 6,7-dimethyl-8-ribityllumazine synthase (158 aa).

Residues Phe22, 57 to 59 (AVE), and 81 to 83 (AVI) contribute to the 5-amino-6-(D-ribitylamino)uracil site. (2S)-2-hydroxy-3-oxobutyl phosphate is bound at residue 86 to 87 (GT). The active-site Proton donor is the His89. Phe114 contributes to the 5-amino-6-(D-ribitylamino)uracil binding site. (2S)-2-hydroxy-3-oxobutyl phosphate is bound at residue Arg128.

The protein belongs to the DMRL synthase family. In terms of assembly, forms an icosahedral capsid composed of 60 subunits, arranged as a dodecamer of pentamers.

The enzyme catalyses (2S)-2-hydroxy-3-oxobutyl phosphate + 5-amino-6-(D-ribitylamino)uracil = 6,7-dimethyl-8-(1-D-ribityl)lumazine + phosphate + 2 H2O + H(+). Its pathway is cofactor biosynthesis; riboflavin biosynthesis; riboflavin from 2-hydroxy-3-oxobutyl phosphate and 5-amino-6-(D-ribitylamino)uracil: step 1/2. Functionally, catalyzes the formation of 6,7-dimethyl-8-ribityllumazine by condensation of 5-amino-6-(D-ribitylamino)uracil with 3,4-dihydroxy-2-butanone 4-phosphate. This is the penultimate step in the biosynthesis of riboflavin. The protein is 6,7-dimethyl-8-ribityllumazine synthase of Shewanella loihica (strain ATCC BAA-1088 / PV-4).